Reading from the N-terminus, the 341-residue chain is S-adenosylmethionine:tRNA ribosyltransferase-isomerase (341 aa).

The protein belongs to the QueA family. Monomer.

Its subcellular location is the cytoplasm. It carries out the reaction 7-aminomethyl-7-carbaguanosine(34) in tRNA + S-adenosyl-L-methionine = epoxyqueuosine(34) in tRNA + adenine + L-methionine + 2 H(+). It functions in the pathway tRNA modification; tRNA-queuosine biosynthesis. Functionally, transfers and isomerizes the ribose moiety from AdoMet to the 7-aminomethyl group of 7-deazaguanine (preQ1-tRNA) to give epoxyqueuosine (oQ-tRNA). This chain is S-adenosylmethionine:tRNA ribosyltransferase-isomerase, found in Thermoanaerobacter sp. (strain X514).